A 273-amino-acid chain; its full sequence is MAFLTGPRLLDWASSPPHLQFNKFVLTGYRPASSGSGCLRSLFYLHNELGNIYTHGLALLGFLVLVPMTMPWSQLGKDGWLGGTHCVACLVPPAASVLYHLFMCHQGGSPVYTRLLALDMCGVCLVNTLGALPIIHCTLACRPWLRPAALMGYTALSGVAGWRALTAPSTSARLRAFGWQAGARLLVFGARGVGLGSGAPGSLPCYLRMDALALLGGLVNVARLPERWGPGRFDYWGNSHQIMHLLSVGSILQLHAGVVPDLLWAAHHACPPD.

5 helical membrane passes run 52–72, 79–99, 115–135, 185–205, and 245–265; these read IYTH…TMPW, GWLG…SVLY, LLAL…LPII, LLVF…SLPC, and LLSV…LLWA.

The protein belongs to the ADIPOR family. As to quaternary structure, interacts with CERS2 and CERS5; the interaction regulates CERS2 and CERS5 stabilities and activities and is inhibited in presence of ceramides. As to expression, expressed in adipose tissue.

It is found in the golgi apparatus membrane. Plays a role in maintaining adipose tissue function through the regulation of ceramide levels. Mediates the stability of ceramide synthetases, CERS2 and CERS5, and their activities. This is Progestin and adipoQ receptor family member 4 from Mus musculus (Mouse).